The primary structure comprises 230 residues: Androgen-dependent TFPI-regulating protein (230 aa).

Residues 1 to 7 (MTKTTTC) are Cytoplasmic-facing. The helical transmembrane segment at 8-28 (VYHFLVLNWYIFLNYHIPQIG) threads the bilayer. Over 29 to 45 (RNEEKLREFHDGGRSKY) the chain is Extracellular. A helical membrane pass occupies residues 46–66 (LTLLNLLLQAIFFGVACLDDV). Over 67–85 (LKRVIGRKDIKFVTSFRDL) the chain is Cytoplasmic. Residues 86–106 (LFTTMAFPISTFVFLVFWTLF) traverse the membrane as a helical segment. The Extracellular portion of the chain corresponds to 107-120 (HYDRSLVYPKGLDD). The chain crosses the membrane as a helical span at residues 121 to 141 (FFPAWVNHAMHTSIFPFSLFE). Residues 142-154 (TILRPHNYPSKKL) lie on the Cytoplasmic side of the membrane. The helical transmembrane segment at 155-175 (GLTLLGAFNFAYIIRILWRYV) threads the bilayer. Residues 176 to 190 (QTGNWVYPVFDSLSP) lie on the Extracellular side of the membrane. The chain crosses the membrane as a helical span at residues 191–211 (LGIIIFFSAAYILVAGIYLFG). Topologically, residues 212-230 (EKINHWKWGAIAKPQMKKN) are cytoplasmic.

Belongs to the AIG1 family.

Its subcellular location is the cell membrane. It catalyses the reaction 9-hexadecanoyloxy-octadecanoate + H2O = 9-hydroxy-octadecanoate + hexadecanoate + H(+). The enzyme catalyses 12-hexadecanoyloxy-octadecanoate + H2O = 12-hydroxyoctadecanoate + hexadecanoate + H(+). The catalysed reaction is 9-(9Z-hexadecenoyloxy)-octadecanoate + H2O = (9Z)-hexadecenoate + 9-hydroxy-octadecanoate + H(+). It carries out the reaction 12-(9Z-hexadecenoyloxy)-octadecanoate + H2O = 12-hydroxyoctadecanoate + (9Z)-hexadecenoate + H(+). It catalyses the reaction 13-(9Z-hexadecenoyloxy)-octadecanoate + H2O = 13-hydroxy-octadecanoate + (9Z)-hexadecenoate + H(+). The enzyme catalyses 9-octadecanoyloxy-octadecanoate + H2O = 9-hydroxy-octadecanoate + octadecanoate + H(+). The catalysed reaction is 12-octadecanoyloxy-octadecanoate + H2O = 12-hydroxyoctadecanoate + octadecanoate + H(+). It carries out the reaction 13-octadecanoyloxy-octadecanoate + H2O = 13-hydroxy-octadecanoate + octadecanoate + H(+). It catalyses the reaction 9-(9Z-octadecenoyloxy)-octadecanoate + H2O = 9-hydroxy-octadecanoate + (9Z)-octadecenoate + H(+). The enzyme catalyses 12-(9Z-octadecenoyloxy)-octadecanoate + H2O = 12-hydroxyoctadecanoate + (9Z)-octadecenoate + H(+). The catalysed reaction is 13-(9Z-octadecenoyloxy)-octadecanoate + H2O = 13-hydroxy-octadecanoate + (9Z)-octadecenoate + H(+). It carries out the reaction 5-(9Z-octadecenoyloxy)-octadecanoate + H2O = 5-hydroxy-octadecanoate + (9Z)-octadecenoate + H(+). Its function is as follows. Hydrolyzes bioactive fatty-acid esters of hydroxy-fatty acids (FAHFAs), but not other major classes of lipids. Shows a preference for FAHFAs with branching distal from the carboxylate head group of the lipids. Regulates the expression and the cell-associated anticoagulant activity of the inhibitor TFPI in endothelial cells (in vitro). The sequence is that of Androgen-dependent TFPI-regulating protein (Adtrp) from Mus musculus (Mouse).